We begin with the raw amino-acid sequence, 224 residues long: Oxalate oxidase GF-2.8 (224 aa).

An N-terminal signal peptide occupies residues 1 to 23 (MGYSKTLVAGLFAMLLLAPAVLA). A disulfide bridge links C33 with C49. The region spanning 63 to 214 (SKLAKAGNTS…ALRVEARVVE (152 aa)) is the Cupin type-1 domain. N-linked (GlcNAc...) asparagine glycans are attached at residues N70 and N75. Positions 111, 113, 118, and 160 each coordinate Mn(2+).

Belongs to the germin family. Oligomer (believed to be a pentamer but probably hexamer).

The protein resides in the secreted. Its subcellular location is the extracellular space. The protein localises to the apoplast. It is found in the cytoplasm. It localises to the cell wall. It catalyses the reaction oxalate + O2 + 2 H(+) = H2O2 + 2 CO2. Its function is as follows. Produces developmental and stress-related release of hydrogen peroxide in the apoplast. May play an important role in several aspects of plant growth and defense mechanisms. The chain is Oxalate oxidase GF-2.8 from Triticum aestivum (Wheat).